A 530-amino-acid chain; its full sequence is uncharacterized protein (530 aa).

The protein belongs to the protein kinase superfamily. ADCK protein kinase family.

This is an uncharacterized protein from Clostridium pasteurianum.